We begin with the raw amino-acid sequence, 62 residues long: Large ribosomal subunit protein bL28 (62 aa).

This sequence belongs to the bacterial ribosomal protein bL28 family.

This Caldicellulosiruptor bescii (strain ATCC BAA-1888 / DSM 6725 / KCTC 15123 / Z-1320) (Anaerocellum thermophilum) protein is Large ribosomal subunit protein bL28.